We begin with the raw amino-acid sequence, 307 residues long: MKNVEKYLEYAPEVKKAIAEGRPIVALESTIISHGMPYPQNVETAKKVEDMIREGGAVPATIAIVKGKIKVGLTEEELMFLGQSKDVVKASRRDLPLIIAKELNGATTVASTMIIAALAGIKVFVTGGIGGVHRGAQETLDISADLMELAQTNVAVVCAGVKSILDIGLTLEVLETHGVPIVGYQTEDFPAFYTRKSGYGVDYAVANVEELARALKAKWDLDLKGGVVVANPIPEAYAMDEALITQAIDEAVQEAAAKGIQGKETTPFLLTKIKEITEGKSLESNIELVFNNAKIGAELAVALHRLS.

The active-site Proton donor is the glutamate 28. Substrate is bound by residues lysine 89 and valine 109. Residue aspartate 141 participates in Mn(2+) binding. 143 to 145 (SAD) serves as a coordination point for substrate. The active-site Nucleophile is lysine 162.

The protein belongs to the pseudouridine-5'-phosphate glycosidase family. Homotrimer. Requires Mn(2+) as cofactor.

The catalysed reaction is D-ribose 5-phosphate + uracil = psi-UMP + H2O. In terms of biological role, catalyzes the reversible cleavage of pseudouridine 5'-phosphate (PsiMP) to ribose 5-phosphate and uracil. Functions biologically in the cleavage direction, as part of a pseudouridine degradation pathway. The polypeptide is Pseudouridine-5'-phosphate glycosidase (Alkaliphilus metalliredigens (strain QYMF)).